A 177-amino-acid polypeptide reads, in one-letter code: tRNA (cytidine(56)-2'-O)-methyltransferase (177 aa).

Residues Leu-84 and 109 to 113 (GAEKV) each bind S-adenosyl-L-methionine.

The protein belongs to the aTrm56 family. Homodimer.

Its subcellular location is the cytoplasm. The catalysed reaction is cytidine(56) in tRNA + S-adenosyl-L-methionine = 2'-O-methylcytidine(56) in tRNA + S-adenosyl-L-homocysteine + H(+). In terms of biological role, specifically catalyzes the AdoMet-dependent 2'-O-ribose methylation of cytidine at position 56 in tRNAs. The sequence is that of tRNA (cytidine(56)-2'-O)-methyltransferase from Methanosarcina mazei (strain ATCC BAA-159 / DSM 3647 / Goe1 / Go1 / JCM 11833 / OCM 88) (Methanosarcina frisia).